The chain runs to 59 residues: uncharacterized protein (59 aa).

Positions 1–21 are cleaved as a signal peptide; the sequence is MYLFYVLLSSLFLSALIYVIG. Topologically, residues 22-24 are extracellular; the sequence is KSH. The chain crosses the membrane as a helical span at residues 25–45; the sequence is PNLFMFISLFVNVVTILYLVF. Residues 46-59 lie on the Cytoplasmic side of the membrane; that stretch reads KDYGQYIIAKPINT.

The protein localises to the host membrane. This is an uncharacterized protein from Acidianus convivator (ABV).